Reading from the N-terminus, the 366-residue chain is Anhydro-N-acetylmuramic acid kinase (366 aa).

ATP is bound at residue 10-17 (GTSLDGVD).

It belongs to the anhydro-N-acetylmuramic acid kinase family.

It carries out the reaction 1,6-anhydro-N-acetyl-beta-muramate + ATP + H2O = N-acetyl-D-muramate 6-phosphate + ADP + H(+). The protein operates within amino-sugar metabolism; 1,6-anhydro-N-acetylmuramate degradation. Its pathway is cell wall biogenesis; peptidoglycan recycling. Functionally, catalyzes the specific phosphorylation of 1,6-anhydro-N-acetylmuramic acid (anhMurNAc) with the simultaneous cleavage of the 1,6-anhydro ring, generating MurNAc-6-P. Is required for the utilization of anhMurNAc either imported from the medium or derived from its own cell wall murein, and thus plays a role in cell wall recycling. The polypeptide is Anhydro-N-acetylmuramic acid kinase (Nitrobacter winogradskyi (strain ATCC 25391 / DSM 10237 / CIP 104748 / NCIMB 11846 / Nb-255)).